The primary structure comprises 566 residues: Beta,beta-carotene 15,15'-dioxygenase (566 aa).

Positions 172, 237, 308, and 514 each coordinate Fe cation. Residues 529 to 566 (TPAKTQEDENSDHPTGLTAPGLGHGENDFTAGHGGKSL) form a disordered region.

This sequence belongs to the carotenoid oxygenase family. Requires Fe(2+) as cofactor.

Its subcellular location is the cytoplasm. The protein localises to the cytosol. It catalyses the reaction all-trans-beta-carotene + O2 = 2 all-trans-retinal. The protein operates within cofactor metabolism; retinol metabolism. In terms of biological role, symmetrically cleaves beta-carotene into two molecules of retinal using a dioxygenase mechanism. The polypeptide is Beta,beta-carotene 15,15'-dioxygenase (Rattus norvegicus (Rat)).